Here is a 191-residue protein sequence, read N- to C-terminus: Putative NADH dehydrogenase/NAD(P)H nitroreductase (191 aa).

Ala127–Gly132 is an NAD(+) binding site.

It belongs to the nitroreductase family. FMN serves as cofactor.

The polypeptide is Putative NADH dehydrogenase/NAD(P)H nitroreductase (Methanothermobacter thermautotrophicus (strain ATCC 29096 / DSM 1053 / JCM 10044 / NBRC 100330 / Delta H) (Methanobacterium thermoautotrophicum)).